A 65-amino-acid polypeptide reads, in one-letter code: MLTLQSSGTGQRKVAVHMGLLENISLKISKEVGGLYDTRMAQQGQLLKLLVGTVRKWDHSFFMDL.

This Mus musculus (Mouse) protein is Putative per-hexamer repeat protein 2 (Phxr2).